Reading from the N-terminus, the 53-residue chain is Neuronal protein NP-190 (53 aa).

As to expression, mainly expressed in the fetal brain where it is specifically localized to the proximal axonal segments, cell bodies and growth cones. Lower level of expression was also detected in the fetal heart and the skeletal muscle. No expression in kidney, liver, lung or spleen.

The protein resides in the membrane. In terms of biological role, neuronal antigen that may play a role in brain development. May be involved in neurite formation or axonal guidance. The polypeptide is Neuronal protein NP-190 (Sus scrofa (Pig)).